We begin with the raw amino-acid sequence, 346 residues long: Protein RecA (346 aa).

65-72 lines the ATP pocket; sequence GPESSGKT.

Belongs to the RecA family.

It localises to the cytoplasm. Its function is as follows. Can catalyze the hydrolysis of ATP in the presence of single-stranded DNA, the ATP-dependent uptake of single-stranded DNA by duplex DNA, and the ATP-dependent hybridization of homologous single-stranded DNAs. It interacts with LexA causing its activation and leading to its autocatalytic cleavage. This is Protein RecA from Enterococcus mundtii.